The sequence spans 198 residues: Cytochrome c oxidase assembly protein CtaG (198 aa).

At 1 to 12 the chain is on the cytoplasmic side; it reads MADNGQADRKER. The helical; Signal-anchor for type II membrane protein transmembrane segment at 13–35 threads the bilayer; that stretch reads SNGVIVGTCLAFVAGMIGMAYAA. Topologically, residues 36–198 are periplasmic; sequence VPLYDMFCRV…QVKAKAENKL (163 aa).

The protein belongs to the COX11/CtaG family.

The protein resides in the cell inner membrane. Exerts its effect at some terminal stage of cytochrome c oxidase synthesis, probably by being involved in the insertion of the copper B into subunit I. The sequence is that of Cytochrome c oxidase assembly protein CtaG from Rhizobium meliloti (strain 1021) (Ensifer meliloti).